Here is a 270-residue protein sequence, read N- to C-terminus: Shikimate dehydrogenase (NADP(+)) (270 aa).

Residues 14-16 (SKS) and Thr61 contribute to the shikimate site. Lys65 acts as the Proton acceptor in catalysis. Shikimate is bound by residues Asn86 and Asp101. NADP(+) is bound by residues 126–130 (GAGGA), 150–155 (NRTVDK), and Met215. Shikimate is bound at residue Tyr217. Gly238 provides a ligand contact to NADP(+).

This sequence belongs to the shikimate dehydrogenase family. In terms of assembly, homodimer.

It catalyses the reaction shikimate + NADP(+) = 3-dehydroshikimate + NADPH + H(+). Its pathway is metabolic intermediate biosynthesis; chorismate biosynthesis; chorismate from D-erythrose 4-phosphate and phosphoenolpyruvate: step 4/7. Functionally, involved in the biosynthesis of the chorismate, which leads to the biosynthesis of aromatic amino acids. Catalyzes the reversible NADPH linked reduction of 3-dehydroshikimate (DHSA) to yield shikimate (SA). This Methylobacillus flagellatus (strain ATCC 51484 / DSM 6875 / VKM B-1610 / KT) protein is Shikimate dehydrogenase (NADP(+)).